We begin with the raw amino-acid sequence, 253 residues long: Non-homologous end joining protein Ku (253 aa).

Residues 9-192 (ISFGLVNIPV…EITEEELELA (184 aa)) form the Ku domain.

Belongs to the prokaryotic Ku family. In terms of assembly, homodimer. Interacts with LigD.

Functionally, with LigD forms a non-homologous end joining (NHEJ) DNA repair enzyme, which repairs dsDNA breaks with reduced fidelity. Binds linear dsDNA with 5'- and 3'- overhangs but not closed circular dsDNA nor ssDNA. Recruits and stimulates the ligase activity of LigD. This chain is Non-homologous end joining protein Ku, found in Archaeoglobus fulgidus (strain ATCC 49558 / DSM 4304 / JCM 9628 / NBRC 100126 / VC-16).